Consider the following 499-residue polypeptide: Maturase K (499 aa).

Belongs to the intron maturase 2 family. MatK subfamily.

It is found in the plastid. The protein localises to the chloroplast. Usually encoded in the trnK tRNA gene intron. Probably assists in splicing its own and other chloroplast group II introns. The chain is Maturase K from Ceratonia siliqua (Carob).